A 56-amino-acid polypeptide reads, in one-letter code: uncharacterized protein (56 aa).

The next 2 membrane-spanning stretches (helical) occupy residues 5–23 and 33–55; these read VLIFLIGYLPFFLAAYWIY and ITAGAILSFDAAMLAIFGGILGW.

The protein localises to the cell membrane. This is an uncharacterized protein from Archaeoglobus fulgidus (strain ATCC 49558 / DSM 4304 / JCM 9628 / NBRC 100126 / VC-16).